The primary structure comprises 163 residues: NADH-quinone oxidoreductase subunit B (163 aa).

4 residues coordinate [4Fe-4S] cluster: C32, C33, C98, and C127.

The protein belongs to the complex I 20 kDa subunit family. In terms of assembly, NDH-1 is composed of 14 different subunits. Subunits NuoB, C, D, E, F, and G constitute the peripheral sector of the complex. Requires [4Fe-4S] cluster as cofactor.

It localises to the cell inner membrane. It carries out the reaction a quinone + NADH + 5 H(+)(in) = a quinol + NAD(+) + 4 H(+)(out). Functionally, NDH-1 shuttles electrons from NADH, via FMN and iron-sulfur (Fe-S) centers, to quinones in the respiratory chain. Couples the redox reaction to proton translocation (for every two electrons transferred, four hydrogen ions are translocated across the cytoplasmic membrane), and thus conserves the redox energy in a proton gradient. This is NADH-quinone oxidoreductase subunit B from Pelobacter propionicus (strain DSM 2379 / NBRC 103807 / OttBd1).